Consider the following 315-residue polypeptide: N-acetyl-D-glutamate racemase (315 aa).

Mg(2+)-binding residues include D147, E173, and D196.

Belongs to the mandelate racemase/muconate lactonizing enzyme family. Mg(2+) serves as cofactor.

The enzyme catalyses N-acetyl-D-glutamate = N-acetyl-L-glutamate. Its pathway is amino-acid degradation. Functionally, racemase involved in a deamination-independent D-glutamate degradation pathway, named the DgcN-DgcA pathway. Catalyzes the conversion of N-acetyl-D-glutamate to N-acetyl-L-glutamate. Also shows racemase activity towards the dipeptide L-Ala-D-Glu, a key constituent of peptidoglycan muropeptides, suggesting that it may also contribute to the degradation of peptidoglycans. This is N-acetyl-D-glutamate racemase from Pseudoalteromonas sp.